A 266-amino-acid polypeptide reads, in one-letter code: rRNA adenine N-6-methyltransferase (266 aa).

Histidine 14, threonine 16, glycine 41, glutamate 62, aspartate 87, and asparagine 103 together coordinate S-adenosyl-L-methionine.

The protein belongs to the class I-like SAM-binding methyltransferase superfamily. rRNA adenine N(6)-methyltransferase family.

Its function is as follows. Involved in erythromycin resistance. The polypeptide is rRNA adenine N-6-methyltransferase (ermFU) (Bacteroides fragilis).